Here is a 192-residue protein sequence, read N- to C-terminus: Xanthine phosphoribosyltransferase (192 aa).

The xanthine site is built by leucine 20 and threonine 26. Position 127–131 (127–131 (ANGQA)) interacts with 5-phospho-alpha-D-ribose 1-diphosphate. Position 155 (lysine 155) interacts with xanthine.

The protein belongs to the purine/pyrimidine phosphoribosyltransferase family. Xpt subfamily. Homodimer.

It localises to the cytoplasm. The enzyme catalyses XMP + diphosphate = xanthine + 5-phospho-alpha-D-ribose 1-diphosphate. Its pathway is purine metabolism; XMP biosynthesis via salvage pathway; XMP from xanthine: step 1/1. Its function is as follows. Converts the preformed base xanthine, a product of nucleic acid breakdown, to xanthosine 5'-monophosphate (XMP), so it can be reused for RNA or DNA synthesis. This is Xanthine phosphoribosyltransferase from Streptococcus thermophilus.